The primary structure comprises 346 residues: Phosphoribosylformylglycinamidine cyclo-ligase (346 aa).

The protein belongs to the AIR synthase family.

The protein resides in the cytoplasm. It catalyses the reaction 2-formamido-N(1)-(5-O-phospho-beta-D-ribosyl)acetamidine + ATP = 5-amino-1-(5-phospho-beta-D-ribosyl)imidazole + ADP + phosphate + H(+). It functions in the pathway purine metabolism; IMP biosynthesis via de novo pathway; 5-amino-1-(5-phospho-D-ribosyl)imidazole from N(2)-formyl-N(1)-(5-phospho-D-ribosyl)glycinamide: step 2/2. In Prochlorococcus marinus (strain NATL1A), this protein is Phosphoribosylformylglycinamidine cyclo-ligase.